The chain runs to 557 residues: Dihydroxy-acid dehydratase (557 aa).

Cysteine 50 contacts [2Fe-2S] cluster. Aspartate 82 is a binding site for Mg(2+). Cysteine 123 is a binding site for [2Fe-2S] cluster. The Mg(2+) site is built by aspartate 124 and lysine 125. Lysine 125 is subject to N6-carboxylysine. Cysteine 195 serves as a coordination point for [2Fe-2S] cluster. Residue glutamate 447 participates in Mg(2+) binding. Residue serine 473 is the Proton acceptor of the active site.

This sequence belongs to the IlvD/Edd family. As to quaternary structure, homodimer. [2Fe-2S] cluster is required as a cofactor. Requires Mg(2+) as cofactor.

It carries out the reaction (2R)-2,3-dihydroxy-3-methylbutanoate = 3-methyl-2-oxobutanoate + H2O. The enzyme catalyses (2R,3R)-2,3-dihydroxy-3-methylpentanoate = (S)-3-methyl-2-oxopentanoate + H2O. Its pathway is amino-acid biosynthesis; L-isoleucine biosynthesis; L-isoleucine from 2-oxobutanoate: step 3/4. It participates in amino-acid biosynthesis; L-valine biosynthesis; L-valine from pyruvate: step 3/4. In terms of biological role, functions in the biosynthesis of branched-chain amino acids. Catalyzes the dehydration of (2R,3R)-2,3-dihydroxy-3-methylpentanoate (2,3-dihydroxy-3-methylvalerate) into 2-oxo-3-methylpentanoate (2-oxo-3-methylvalerate) and of (2R)-2,3-dihydroxy-3-methylbutanoate (2,3-dihydroxyisovalerate) into 2-oxo-3-methylbutanoate (2-oxoisovalerate), the penultimate precursor to L-isoleucine and L-valine, respectively. The sequence is that of Dihydroxy-acid dehydratase from Burkholderia mallei (strain NCTC 10247).